A 193-amino-acid polypeptide reads, in one-letter code: Xanthine phosphoribosyltransferase (193 aa).

Positions 20 and 27 each coordinate xanthine. 129–133 (ANGKA) serves as a coordination point for 5-phospho-alpha-D-ribose 1-diphosphate. Position 157 (lysine 157) interacts with xanthine.

This sequence belongs to the purine/pyrimidine phosphoribosyltransferase family. Xpt subfamily. In terms of assembly, homodimer.

The protein localises to the cytoplasm. It catalyses the reaction XMP + diphosphate = xanthine + 5-phospho-alpha-D-ribose 1-diphosphate. Its pathway is purine metabolism; XMP biosynthesis via salvage pathway; XMP from xanthine: step 1/1. Its function is as follows. Converts the preformed base xanthine, a product of nucleic acid breakdown, to xanthosine 5'-monophosphate (XMP), so it can be reused for RNA or DNA synthesis. This is Xanthine phosphoribosyltransferase from Bifidobacterium adolescentis (strain ATCC 15703 / DSM 20083 / NCTC 11814 / E194a).